A 335-amino-acid chain; its full sequence is tRNA methyltransferase 10 homolog A (335 aa).

Disordered stretches follow at residues 1–91 (MSSE…DRKR) and 279–335 (VPAH…PDPQ). Phosphoserine occurs at positions 22 and 24. A compositionally biased stretch (basic and acidic residues) spans 52-62 (RLWEEQREQRK). The stretch at 52–84 (RLWEEQREQRKEKRKEKRKRKKLERRCQLESNS) forms a coiled coil. A compositionally biased stretch (basic residues) spans 63–75 (EKRKEKRKRKKLE). Positions 88–279 (DRKRIRRHVA…TILPPRKGAV (192 aa)) constitute an SAM-dependent MTase TRM10-type domain. Residues 304-319 (EGEHGRDDPGSPHKEQ) show a composition bias toward basic and acidic residues. Residues 320–335 (QGQQSSSVSAVSPDPQ) show a composition bias toward low complexity. At Ser331 the chain carries Phosphoserine.

Belongs to the class IV-like SAM-binding methyltransferase superfamily. TRM10 family. In terms of assembly, interacts with tRNA. Ubiquitously expressed. Is more abundant in brain and pancreatic islets compared to other tissues (at protein level).

It localises to the nucleus. Its subcellular location is the nucleolus. The enzyme catalyses guanosine(9) in tRNA + S-adenosyl-L-methionine = N(1)-methylguanosine(9) in tRNA + S-adenosyl-L-homocysteine + H(+). Its function is as follows. S-adenosyl-L-methionine-dependent guanine N(1)-methyltransferase that catalyzes the formation of N(1)-methylguanine at position 9 (m1G9) in tRNAs. Probably not able to catalyze formation of N(1)-methyladenine at position 9 (m1A9) in tRNAs. The sequence is that of tRNA methyltransferase 10 homolog A (Trmt10a) from Rattus norvegicus (Rat).